A 120-amino-acid chain; its full sequence is Small ribosomal subunit protein eS24 (120 aa).

The disordered stretch occupies residues 101–120; that stretch reads RDAGTKQKKGGSKGGQGAKG.

Belongs to the eukaryotic ribosomal protein eS24 family.

The protein is Small ribosomal subunit protein eS24 of Saccharolobus islandicus (strain M.16.4 / Kamchatka #3) (Sulfolobus islandicus).